The following is a 180-amino-acid chain: D-lyxose ketol-isomerase (180 aa).

Lys62 is a binding site for D-fructose. 2 residues coordinate Mn(2+): His75 and His77. Lys86 contributes to the D-fructose binding site. Residues Glu88 and His143 each contribute to the Mn(2+) site. D-fructose-binding residues include Glu156, Asp166, and Arg175.

It belongs to the D-lyxose ketol-isomerase family. Homodimer; disulfide-linked. Stabilized by a disulfide bond between the two monomers of the dimeric enzyme and increased hydrophobicity at the dimer interface. It depends on Mn(2+) as a cofactor.

It catalyses the reaction D-lyxose = D-xylulose. Sugar isomerase that catalyzes the reversible isomerization of D-lyxose to D-xylulose. Is highly specific for the substrate D-lyxose, showing less than 2% activity towards mannose and other substrates reported for lyxose isomerases. In Thermofilum sp. (strain ex4484_79), this protein is D-lyxose ketol-isomerase.